The chain runs to 701 residues: Capsid protein VP1 (701 aa).

It belongs to the caliciviridae capsid protein family. Homodimer. Homomultimer. Interacts with the minor capsid protein VP2. May bind to VP3 and Vpg proteins. Cleaved by the viral protease to produce mature capsid protein.

The protein localises to the virion. The protein resides in the host cytoplasm. In terms of biological role, capsid protein self assembles to form an icosahedral capsid with a T=3 symmetry, about 38 nm in diameter, and consisting of 180 capsid proteins. A smaller form of capsid with a diameter of 23 nm might be capsid proteins assembled as icosahedron with T=1 symmetry. The capsid encapsulates the genomic RNA and is decorated with VP2 proteins. This chain is Capsid protein VP1, found in Vesicular exanthema of swine virus serotype A48 (isolate Swine/United States/A48/1948) (VESV).